A 308-amino-acid polypeptide reads, in one-letter code: Tryptophan 2,3-dioxygenase (308 aa).

The disordered stretch occupies residues 1–37 (MKPPGDNAPAGCPFSGARAAQPAHEAPHVPGDAAGET). Residues 77-81 (FIIQH), Tyr139, and Arg143 each bind substrate. Residue His266 participates in heme binding. Thr280 contacts substrate.

It belongs to the tryptophan 2,3-dioxygenase family. Homotetramer. Heme is required as a cofactor.

The catalysed reaction is L-tryptophan + O2 = N-formyl-L-kynurenine. It participates in amino-acid degradation; L-tryptophan degradation via kynurenine pathway; L-kynurenine from L-tryptophan: step 1/2. Its function is as follows. Heme-dependent dioxygenase that catalyzes the oxidative cleavage of the L-tryptophan (L-Trp) pyrrole ring and converts L-tryptophan to N-formyl-L-kynurenine. Catalyzes the oxidative cleavage of the indole moiety. This chain is Tryptophan 2,3-dioxygenase, found in Burkholderia ambifaria (strain MC40-6).